Here is a 207-residue protein sequence, read N- to C-terminus: MSKLSRRQQEILDYIKEEVRAKGYPPSVREIGEAVGLASSSTVHGHLSRLEKKGYIRRDPTKPRAIEVLDLENLASETTEAKATYIPVVGKVTAGLPITAVENVEEYFPLPEQLTANDNTYALRIQGDSMIEAGIFDGDLVIVRQQQTADNGDIIVAMTEEDEATVKRFFREKDYIRLQPENSTMEPIILTTCTILGKVIGVFRTIH.

A DNA-binding region (H-T-H motif) is located at residues 28 to 48 (VREIGEAVGLASSSTVHGHLS). Catalysis depends on for autocatalytic cleavage activity residues Ser-129 and Lys-167.

It belongs to the peptidase S24 family. In terms of assembly, homodimer.

The enzyme catalyses Hydrolysis of Ala-|-Gly bond in repressor LexA.. Functionally, represses a number of genes involved in the response to DNA damage (SOS response), including recA and lexA. In the presence of single-stranded DNA, RecA interacts with LexA causing an autocatalytic cleavage which disrupts the DNA-binding part of LexA, leading to derepression of the SOS regulon and eventually DNA repair. This chain is LexA repressor, found in Halalkalibacterium halodurans (strain ATCC BAA-125 / DSM 18197 / FERM 7344 / JCM 9153 / C-125) (Bacillus halodurans).